Reading from the N-terminus, the 196-residue chain is Cupin-domain-containing oxidoreductase srdB (196 aa).

Positions 92–156 (DFAPGCKSNM…TSDEKPARML (65 aa)) constitute a Cupin type-2 domain.

It belongs to the virC family.

Its function is as follows. Cupin-domain-containing oxidoreductase; part of the gene cluster that mediates the biosynthesis of sordarial, a salicylic aldehyde structurally related to the phytotoxin pyriculol. The most interesting aspect of this pathway is formation of an aromatic product from the highly reducing polyketide synthase srdA. SrdA synthesizes a reduced polyketide chain from one molecule of acetyl-CoA and five molecules of malonyl-CoA. The polyketide chain is then reductively released as an aldehyde. The oxidoreductases srdC, srdD and srdE then oxidize one of the hydroxy groups to facilitate the intramolecular aldol condensation, followed by dehydration to yield a salicylic aldehyde. This aldehyde can undergo facile reduction by endogenous reductases to yield the alcohol 1-hydroxy-2-hydroxymethyl-3-pent-1,3-dienylbenzene. The flavin-dependent srdI counteract against the propensity of the aldehydes to be reduced under physiological conditions and is responsible for reoxidizing 1-hydroxy-2-hydroxymethyl-3-pent-1,3-dienylbenzene back to the salicylic aldehyde. This salicylic aldehyde is then selectively epoxidized by the cupin-domain-containing oxidoreductase srdB to yield the epoxide, which can be hydrolyzed stereoselectively by the hydrolase srdG to give the final product sordarial. The protein is Cupin-domain-containing oxidoreductase srdB of Neurospora crassa (strain ATCC 24698 / 74-OR23-1A / CBS 708.71 / DSM 1257 / FGSC 987).